The sequence spans 594 residues: Glutamate decarboxylase 1 (594 aa).

Residues 1–13 (MASSTPSSSATSS) show a composition bias toward low complexity. Residues 1 to 23 (MASSTPSSSATSSNAGADPNTTN) are disordered. Phosphoserine is present on serine 78. 190 to 192 (QLS) lines the 4-aminobutanoate pocket. An N6-(pyridoxal phosphate)lysine modification is found at lysine 405. Arginine 567 contacts 4-aminobutanoate.

Belongs to the group II decarboxylase family. Homodimer. It depends on pyridoxal 5'-phosphate as a cofactor.

It catalyses the reaction L-glutamate + H(+) = 4-aminobutanoate + CO2. Catalyzes the synthesis of the inhibitory neurotransmitter gamma-aminobutyric acid (GABA) with pyridoxal 5'-phosphate as cofactor. The sequence is that of Glutamate decarboxylase 1 (GAD1) from Bos taurus (Bovine).